The chain runs to 1199 residues: DNA-directed RNA polymerase subunit beta' (1199 aa).

Cys60, Cys62, Cys75, and Cys78 together coordinate Zn(2+). Mg(2+) contacts are provided by Asp449, Asp451, and Asp453. Zn(2+) contacts are provided by Cys818, Cys892, Cys899, and Cys902.

The protein belongs to the RNA polymerase beta' chain family. As to quaternary structure, RNAP is composed of a core of 2 alpha, a beta and a beta' subunit. The core is associated with a delta subunit, and at least one of epsilon or omega. When a sigma factor is associated with the core the holoenzyme is formed, which can initiate transcription. The cofactor is Mg(2+). Zn(2+) is required as a cofactor.

The catalysed reaction is RNA(n) + a ribonucleoside 5'-triphosphate = RNA(n+1) + diphosphate. Its function is as follows. DNA-dependent RNA polymerase catalyzes the transcription of DNA into RNA using the four ribonucleoside triphosphates as substrates. This Bacillus subtilis (strain 168) protein is DNA-directed RNA polymerase subunit beta'.